The sequence spans 339 residues: Ketol-acid reductoisomerase (NADP(+)) (339 aa).

The 182-residue stretch at 1–182 (MRVYYDRDAD…GGGRSGIIET (182 aa)) folds into the KARI N-terminal Rossmann domain. NADP(+) is bound by residues 24-27 (YGSQ), arginine 48, serine 51, threonine 53, and 83-86 (DEHQ). Residue histidine 108 is part of the active site. Residue glycine 134 coordinates NADP(+). The region spanning 183–328 (NFREECETDL…ARLRGMMPWI (146 aa)) is the KARI C-terminal knotted domain. Residues aspartate 191, glutamate 195, glutamate 227, and glutamate 231 each coordinate Mg(2+). Serine 252 serves as a coordination point for substrate.

The protein belongs to the ketol-acid reductoisomerase family. Mg(2+) serves as cofactor.

It catalyses the reaction (2R)-2,3-dihydroxy-3-methylbutanoate + NADP(+) = (2S)-2-acetolactate + NADPH + H(+). The catalysed reaction is (2R,3R)-2,3-dihydroxy-3-methylpentanoate + NADP(+) = (S)-2-ethyl-2-hydroxy-3-oxobutanoate + NADPH + H(+). It functions in the pathway amino-acid biosynthesis; L-isoleucine biosynthesis; L-isoleucine from 2-oxobutanoate: step 2/4. The protein operates within amino-acid biosynthesis; L-valine biosynthesis; L-valine from pyruvate: step 2/4. Functionally, involved in the biosynthesis of branched-chain amino acids (BCAA). Catalyzes an alkyl-migration followed by a ketol-acid reduction of (S)-2-acetolactate (S2AL) to yield (R)-2,3-dihydroxy-isovalerate. In the isomerase reaction, S2AL is rearranged via a Mg-dependent methyl migration to produce 3-hydroxy-3-methyl-2-ketobutyrate (HMKB). In the reductase reaction, this 2-ketoacid undergoes a metal-dependent reduction by NADPH to yield (R)-2,3-dihydroxy-isovalerate. The chain is Ketol-acid reductoisomerase (NADP(+)) from Caulobacter vibrioides (strain ATCC 19089 / CIP 103742 / CB 15) (Caulobacter crescentus).